We begin with the raw amino-acid sequence, 707 residues long: Polyribonucleotide nucleotidyltransferase (707 aa).

Positions 484 and 490 each coordinate Mg(2+). The region spanning 551 to 610 (PRVVRMVVNPEKIRDIIGPAGKTITKIISETGVKIDIEEDGRLYITAPNLEAGERAKQMI) is the KH domain. One can recognise an S1 motif domain in the interval 620-688 (GGIYLGKVLR…KLGRIVLSRK (69 aa)). The disordered stretch occupies residues 688–707 (KDAMPDEEESDNRKSDNRKK). Residues 698 to 707 (DNRKSDNRKK) are compositionally biased toward basic and acidic residues.

Belongs to the polyribonucleotide nucleotidyltransferase family. It depends on Mg(2+) as a cofactor.

Its subcellular location is the cytoplasm. It carries out the reaction RNA(n+1) + phosphate = RNA(n) + a ribonucleoside 5'-diphosphate. Functionally, involved in mRNA degradation. Catalyzes the phosphorolysis of single-stranded polyribonucleotides processively in the 3'- to 5'-direction. This chain is Polyribonucleotide nucleotidyltransferase, found in Caldanaerobacter subterraneus subsp. tengcongensis (strain DSM 15242 / JCM 11007 / NBRC 100824 / MB4) (Thermoanaerobacter tengcongensis).